We begin with the raw amino-acid sequence, 314 residues long: tRNA dimethylallyltransferase (314 aa).

Position 11 to 18 (11 to 18) interacts with ATP; that stretch reads GPTAVGKT. Residue 13–18 coordinates substrate; sequence TAVGKT. The interaction with substrate tRNA stretch occupies residues 36 to 39; it reads DSMQ.

Belongs to the IPP transferase family. As to quaternary structure, monomer. Requires Mg(2+) as cofactor.

The catalysed reaction is adenosine(37) in tRNA + dimethylallyl diphosphate = N(6)-dimethylallyladenosine(37) in tRNA + diphosphate. Catalyzes the transfer of a dimethylallyl group onto the adenine at position 37 in tRNAs that read codons beginning with uridine, leading to the formation of N6-(dimethylallyl)adenosine (i(6)A). This Bacillus anthracis protein is tRNA dimethylallyltransferase.